Consider the following 562-residue polypeptide: Dihydroxy-acid dehydratase 2 (562 aa).

C50 provides a ligand contact to [2Fe-2S] cluster. D82 is a Mg(2+) binding site. Position 123 (C123) interacts with [2Fe-2S] cluster. Positions 124, 125, and 447 each coordinate Mg(2+). N6-carboxylysine is present on K125. S473 acts as the Proton acceptor in catalysis.

This sequence belongs to the IlvD/Edd family. Homodimer. Requires [2Fe-2S] cluster as cofactor. Mg(2+) serves as cofactor.

The catalysed reaction is (2R)-2,3-dihydroxy-3-methylbutanoate = 3-methyl-2-oxobutanoate + H2O. It catalyses the reaction (2R,3R)-2,3-dihydroxy-3-methylpentanoate = (S)-3-methyl-2-oxopentanoate + H2O. It participates in amino-acid biosynthesis; L-isoleucine biosynthesis; L-isoleucine from 2-oxobutanoate: step 3/4. The protein operates within amino-acid biosynthesis; L-valine biosynthesis; L-valine from pyruvate: step 3/4. In terms of biological role, functions in the biosynthesis of branched-chain amino acids. Catalyzes the dehydration of (2R,3R)-2,3-dihydroxy-3-methylpentanoate (2,3-dihydroxy-3-methylvalerate) into 2-oxo-3-methylpentanoate (2-oxo-3-methylvalerate) and of (2R)-2,3-dihydroxy-3-methylbutanoate (2,3-dihydroxyisovalerate) into 2-oxo-3-methylbutanoate (2-oxoisovalerate), the penultimate precursor to L-isoleucine and L-valine, respectively. The sequence is that of Dihydroxy-acid dehydratase 2 from Bordetella pertussis (strain Tohama I / ATCC BAA-589 / NCTC 13251).